The chain runs to 493 residues: Uridine 5'-monophosphate synthase (493 aa).

The tract at residues 1–207 (MVAQNSDKMR…VAKYIAAVQI (207 aa)) is OPRTase. The domain linker stretch occupies residues 208–233 (NSDGTFVGGDKGDVVRANDLQRTKLT). Residues 234 to 493 (YENRANLAKS…WAAYQDRVAK (260 aa)) are OMPdecase. The active site involves K320.

This sequence in the N-terminal section; belongs to the purine/pyrimidine phosphoribosyltransferase family. In the C-terminal section; belongs to the OMP decarboxylase family.

The enzyme catalyses orotidine 5'-phosphate + diphosphate = orotate + 5-phospho-alpha-D-ribose 1-diphosphate. The catalysed reaction is orotidine 5'-phosphate + H(+) = UMP + CO2. Its pathway is pyrimidine metabolism; UMP biosynthesis via de novo pathway; UMP from orotate: step 1/2. The protein operates within pyrimidine metabolism; UMP biosynthesis via de novo pathway; UMP from orotate: step 2/2. The chain is Uridine 5'-monophosphate synthase (r-l) from Drosophila melanogaster (Fruit fly).